The primary structure comprises 398 residues: Phosphoglycerate kinase (398 aa).

Residues 22–24, arginine 38, 61–64, arginine 120, and arginine 153 each bind substrate; these read DFN and HLGR. ATP is bound by residues lysine 204, glutamate 326, and 352–355; that span reads GGDT.

Belongs to the phosphoglycerate kinase family. As to quaternary structure, monomer.

It is found in the cytoplasm. The catalysed reaction is (2R)-3-phosphoglycerate + ATP = (2R)-3-phospho-glyceroyl phosphate + ADP. It functions in the pathway carbohydrate degradation; glycolysis; pyruvate from D-glyceraldehyde 3-phosphate: step 2/5. This chain is Phosphoglycerate kinase, found in Geobacter metallireducens (strain ATCC 53774 / DSM 7210 / GS-15).